A 458-amino-acid polypeptide reads, in one-letter code: Glutamyl-tRNA reductase (458 aa).

Residues 49–52, S111, 116–118, and Q122 each bind substrate; these read TCNR and ETE. C50 functions as the Nucleophile in the catalytic mechanism. 191 to 196 contributes to the NADP(+) binding site; sequence GAGKMS. 2 stretches are compositionally biased toward basic and acidic residues: residues 426-440 and 448-458; these read IPKDGEEHSSSKEVE and ERGHHESDFHN. Positions 426-458 are disordered; sequence IPKDGEEHSSSKEVESVTQSSTERGHHESDFHN.

The protein belongs to the glutamyl-tRNA reductase family. Homodimer.

The enzyme catalyses (S)-4-amino-5-oxopentanoate + tRNA(Glu) + NADP(+) = L-glutamyl-tRNA(Glu) + NADPH + H(+). Its pathway is porphyrin-containing compound metabolism; protoporphyrin-IX biosynthesis; 5-aminolevulinate from L-glutamyl-tRNA(Glu): step 1/2. Catalyzes the NADPH-dependent reduction of glutamyl-tRNA(Glu) to glutamate 1-semialdehyde (GSA). The polypeptide is Glutamyl-tRNA reductase (Natranaerobius thermophilus (strain ATCC BAA-1301 / DSM 18059 / JW/NM-WN-LF)).